A 382-amino-acid polypeptide reads, in one-letter code: Lycopene beta-cyclase (382 aa).

6–36 contacts NAD(+); that stretch reads DLILVGAGLANGLIALRLQQQQPDMRILLID.

The protein belongs to the lycopene cyclase family. It depends on FAD as a cofactor.

The protein resides in the cell inner membrane. It catalyses the reaction a carotenoid psi-end group = a carotenoid beta-end derivative. It carries out the reaction all-trans-lycopene = gamma-carotene. The catalysed reaction is gamma-carotene = all-trans-beta-carotene. The enzyme catalyses all-trans-neurosporene = beta-zeacarotene. It catalyses the reaction beta-zeacarotene = 7,8-dihydro-beta-carotene. It participates in carotenoid biosynthesis; beta-carotene biosynthesis. With respect to regulation, activity is increased in the presence of NAD(P)H. NADPH is not involved directly in the cyclization reaction, but must play an indirect role, e.g. as an allosteric activator. Catalyzes the double cyclization reaction which converts lycopene to beta-carotene. Also catalyzes the double cyclization reaction which converts neurosporene to 7,8-dihydro-beta-carotene via monocyclic beta-zeacarotene. May also convert zeta-carotene to bicyclic 7,8,7',8'-tetrahydro-beta-carotene. The protein is Lycopene beta-cyclase of Pantoea ananas (Erwinia uredovora).